The chain runs to 262 residues: (5R,7aS)-5-hydroxy-7a-methyl-1-oxo-2,3,5,6,7,7a-hexahydro-1H-indene-carboxyl-CoA reductase (262 aa).

Residues Asp-50, Asp-77, Val-78, Asn-104, Tyr-170, Lys-174, and Ala-203 each contribute to the NAD(+) site. Tyr-170 (proton acceptor) is an active-site residue.

This sequence belongs to the short-chain dehydrogenases/reductases (SDR) family.

It catalyses the reaction (5R,7aS)-5-hydroxy-7a-methyl-1-oxo-2,3,5,6,7,7a-hexahydro-1H-indene-carboxyl-CoA + NAD(+) = (7aS)-7a-methyl-1,5-dioxo-2,3,5,6,7,7a-hexahydro-1H-indene-carboxyl-CoA + NADH + H(+). It participates in steroid metabolism; cholesterol degradation. Requires the presence of IpdC. Involved in the final steps of cholesterol and steroid degradation. Probably catalyzes the oxidation of the 5-OH group of (5R,7aS)-5-hydroxy-7a-methyl-1-oxo-2,3,5,6,7,7a-hexahydro-1H-indene-carboxyl-CoA, leading to the formation of HIEC-CoA. This is (5R,7aS)-5-hydroxy-7a-methyl-1-oxo-2,3,5,6,7,7a-hexahydro-1H-indene-carboxyl-CoA reductase from Mycobacterium tuberculosis (strain ATCC 25618 / H37Rv).